Consider the following 325-residue polypeptide: Helicase VP6-A (325 aa).

Disordered regions lie at residues 1–122 (MLLA…GATG) and 185–230 (DLRR…EPAR). 4 stretches are compositionally biased toward basic and acidic residues: residues 8–18 (VIKRSSEELKQ), 32–54 (EGGKEDKTEPKEESKAEGSKDGE), 61–79 (GQKEEGGKETKDADVDRRI), and 92–105 (LGERANENADRGDG). Residue Lys106 participates in ATP binding. Residues 106-122 (KVGGGGGDADAGVGATG) show a composition bias toward gly residues. Basic and acidic residues-rich tracts occupy residues 185–203 (DLRRKEKNGTHAKAVERGG) and 211–229 (HGDAQREGVEEEKTSEEPA).

The protein belongs to the orbivirus VP6 family. As to quaternary structure, homohexamer.

It localises to the virion. It catalyses the reaction ATP + H2O = ADP + phosphate + H(+). ATP dependent RNA helicase essential for RNA packaging and viral transcription. Possesses ss- and dsRNA-binding capacity. The protein is Helicase VP6-A (Segment-9) of Bluetongue virus 17 (isolate USA) (BTV 17).